The primary structure comprises 105 residues: UPF0145 protein jk0060 (105 aa).

Belongs to the UPF0145 family.

This chain is UPF0145 protein jk0060, found in Corynebacterium jeikeium (strain K411).